The sequence spans 558 residues: Arginine--tRNA ligase (558 aa).

Positions 119–129 (ANPNGPLHVGH) match the 'HIGH' region motif.

Belongs to the class-I aminoacyl-tRNA synthetase family.

It is found in the cytoplasm. It catalyses the reaction tRNA(Arg) + L-arginine + ATP = L-arginyl-tRNA(Arg) + AMP + diphosphate. The sequence is that of Arginine--tRNA ligase from Methanoregula boonei (strain DSM 21154 / JCM 14090 / 6A8).